The primary structure comprises 124 residues: Ribosome-binding factor A (124 aa).

The protein belongs to the RbfA family. In terms of assembly, monomer. Binds 30S ribosomal subunits, but not 50S ribosomal subunits or 70S ribosomes.

Its subcellular location is the cytoplasm. Its function is as follows. One of several proteins that assist in the late maturation steps of the functional core of the 30S ribosomal subunit. Associates with free 30S ribosomal subunits (but not with 30S subunits that are part of 70S ribosomes or polysomes). Required for efficient processing of 16S rRNA. May interact with the 5'-terminal helix region of 16S rRNA. The protein is Ribosome-binding factor A of Buchnera aphidicola subsp. Schizaphis graminum (strain Sg).